The following is a 148-amino-acid chain: Globin, monomeric component M-IV (148 aa).

The Globin domain maps to 2–147 (GLSAAQRQVV…ISGALISGLQ (146 aa)). Residue His-91 coordinates heme b.

In terms of assembly, monomer.

The polypeptide is Globin, monomeric component M-IV (Glycera dibranchiata (Bloodworm)).